The following is a 422-amino-acid chain: UDP-N-acetylglucosamine 1-carboxyvinyltransferase (422 aa).

22–23 (KN) contributes to the phosphoenolpyruvate binding site. UDP-N-acetyl-alpha-D-glucosamine is bound at residue Arg93. Cys117 acts as the Proton donor in catalysis. Position 117 is a 2-(S-cysteinyl)pyruvic acid O-phosphothioketal (Cys117). UDP-N-acetyl-alpha-D-glucosamine is bound by residues 122–126 (RPVDQ), Asp309, and Ile331.

Belongs to the EPSP synthase family. MurA subfamily.

The protein resides in the cytoplasm. The catalysed reaction is phosphoenolpyruvate + UDP-N-acetyl-alpha-D-glucosamine = UDP-N-acetyl-3-O-(1-carboxyvinyl)-alpha-D-glucosamine + phosphate. It participates in cell wall biogenesis; peptidoglycan biosynthesis. Its function is as follows. Cell wall formation. Adds enolpyruvyl to UDP-N-acetylglucosamine. This Delftia acidovorans (strain DSM 14801 / SPH-1) protein is UDP-N-acetylglucosamine 1-carboxyvinyltransferase.